Consider the following 236-residue polypeptide: Small ribosomal subunit protein uS2c (236 aa).

Belongs to the universal ribosomal protein uS2 family.

It localises to the plastid. The protein resides in the chloroplast. The protein is Small ribosomal subunit protein uS2c (rps2) of Nandina domestica (Heavenly bamboo).